A 35-amino-acid chain; its full sequence is Cupiennin-1d (35 aa).

Glu-35 is subject to Glutamic acid 1-amide.

This sequence belongs to the cationic peptide 04 (cupiennin) family. 01 subfamily. In terms of tissue distribution, expressed by the venom gland.

It is found in the secreted. Its function is as follows. Has antimicrobial activity against B.subtilis, E.coli, E.faecalis, P.aeruginosa, and S.aureus. Has insecticidal and hemolytic activities. Probably acts by disturbing membrane function with its amphipathic structure. This chain is Cupiennin-1d, found in Cupiennius salei (American wandering spider).